The primary structure comprises 196 residues: HTH-type transcriptional regulator BetI (196 aa).

The region spanning 8-68 (PIRRSQLIAA…ATMRHLMQAL (61 aa)) is the HTH tetR-type domain. The segment at residues 31-50 (SIAYIARLAGVSNGIISHYF) is a DNA-binding region (H-T-H motif).

The protein operates within amine and polyamine biosynthesis; betaine biosynthesis via choline pathway [regulation]. Functionally, repressor involved in the biosynthesis of the osmoprotectant glycine betaine. It represses transcription of the choline transporter BetT and the genes of BetAB involved in the synthesis of glycine betaine. The polypeptide is HTH-type transcriptional regulator BetI (Ectopseudomonas mendocina (strain ymp) (Pseudomonas mendocina)).